The chain runs to 451 residues: SVGFKAGVKDYRLTYYTPDYETKDTDILAAFRVTPQPGVPAEEAGAAVAAESSTGTWTTVWTDGLTSLDRYKGRCYHIEAVVGEENQYIAYVAYPLDLFEEGSVTNMFTSIVGNVFGFKALRALRLEDLRIPPSYSKTFQGPPHGIQVERDKLNKYGRPLLGCTIKPKLGLSAKNYGRAVYECLRGGLDFTKDDENVNSQPFMRWRDRFLFCAEAIYKAQAETGEIKGHYLNATAGTCEEMIKRAVFARELGVPIVMHDYLTGGFTANTSLAHYCRDNGLLLHIHRAMHAVIDRQKNHGMHFRVLAKALRMSGGDHIHAGTVVGKLEGEREMTLGFVDLLRDDYIEKDRSRGIFFTQDWVSMPGVLPVASGGIHVWHMPALTEIFGDDSVLQFGGGTLGHPWGNAPGAVANRVALEACVQARNEGRDLAREGNEIIPEACNWSPELAAACE.

The residue at position 5 (Lys5) is an N6,N6,N6-trimethyllysine. Positions 114 and 164 each coordinate substrate. The Proton acceptor role is filled by Lys166. Lys168 provides a ligand contact to substrate. Residues Lys192, Asp194, and Glu195 each contribute to the Mg(2+) site. An N6-carboxylysine modification is found at Lys192. His285 serves as the catalytic Proton acceptor. Arg286, His318, and Ser370 together coordinate substrate.

It belongs to the RuBisCO large chain family. Type I subfamily. Heterohexadecamer of 8 large chains and 8 small chains; disulfide-linked. The disulfide link is formed within the large subunit homodimers. Mg(2+) is required as a cofactor. The disulfide bond which can form in the large chain dimeric partners within the hexadecamer appears to be associated with oxidative stress and protein turnover.

The protein localises to the plastid. It is found in the chloroplast. The enzyme catalyses 2 (2R)-3-phosphoglycerate + 2 H(+) = D-ribulose 1,5-bisphosphate + CO2 + H2O. The catalysed reaction is D-ribulose 1,5-bisphosphate + O2 = 2-phosphoglycolate + (2R)-3-phosphoglycerate + 2 H(+). RuBisCO catalyzes two reactions: the carboxylation of D-ribulose 1,5-bisphosphate, the primary event in carbon dioxide fixation, as well as the oxidative fragmentation of the pentose substrate in the photorespiration process. Both reactions occur simultaneously and in competition at the same active site. This Aristea glauca protein is Ribulose bisphosphate carboxylase large chain.